Reading from the N-terminus, the 140-residue chain is Transcription antitermination protein NusB (140 aa).

It belongs to the NusB family.

Functionally, involved in transcription antitermination. Required for transcription of ribosomal RNA (rRNA) genes. Binds specifically to the boxA antiterminator sequence of the ribosomal RNA (rrn) operons. The sequence is that of Transcription antitermination protein NusB from Sorangium cellulosum (strain So ce56) (Polyangium cellulosum (strain So ce56)).